A 1051-amino-acid polypeptide reads, in one-letter code: Inactive tyrosine-protein kinase 7 (1051 aa).

An N-terminal signal peptide occupies residues 1 to 22 (MAALRALLLLLAVGAQAAIRFA). Ig-like C2-type domains lie at 23 to 105 (KEPY…ANAS), 115 to 204 (SVVL…DNFT), 213 to 298 (PQAV…KATL), 308 to 388 (PFSP…LSIT), 393 to 472 (PKWV…GSIE), 487 to 566 (PPPQ…ATVQ), and 573 to 661 (VTFK…AFLY). At 23–685 (KEPYSQDALH…SHTPYKMIQT (663 aa)) the chain is on the extracellular side. Cys-40 and Cys-88 are disulfide-bonded. An N-linked (GlcNAc...) asparagine glycan is attached at Asn-103. A disulfide bond links Cys-137 and Cys-187. Residues Asn-202, Asn-255, and Asn-264 are each glycosylated (N-linked (GlcNAc...) asparagine). 5 disulfide bridges follow: Cys-234–Cys-282, Cys-326–Cys-372, Cys-414–Cys-462, Cys-505–Cys-551, and Cys-594–Cys-645. Residues Asn-444, Asn-548, and Asn-627 are each glycosylated (N-linked (GlcNAc...) asparagine). The helical transmembrane segment at 686–706 (IGLSVGAAVAYIIIVLGLMFY) threads the bilayer. Residues 707-1051 (CKKRRKAKRL…LGDSPADSKA (345 aa)) lie on the Cytoplasmic side of the membrane. Residues 777 to 1048 (LQTITTLGRG…AAALGDSPAD (272 aa)) form the Protein kinase; inactive domain.

It belongs to the protein kinase superfamily. Tyr protein kinase family. Insulin receptor subfamily. In terms of tissue distribution, expressed in bone marrow, spleen, bursa, thymus and brain. Weakly expressed in fibroblasts. Also expressed in embryonic liver.

The protein resides in the membrane. Inactive tyrosine kinase involved in Wnt signaling. pathway. The polypeptide is Inactive tyrosine-protein kinase 7 (PTK7) (Gallus gallus (Chicken)).